Reading from the N-terminus, the 238-residue chain is Cysteine-rich venom protein pseudechetoxin-like (238 aa).

Residues 1-19 (MIAFIVLLSLAAVLQQSSG) form the signal peptide. Positions 20–28 (TVDFASESS) are excised as a propeptide. An SCP domain is found at 38–164 (VDKHNDLRRS…STKYLYVCQY (127 aa)). Intrachain disulfides connect cysteine 75–cysteine 153, cysteine 92–cysteine 165, cysteine 148–cysteine 162, cysteine 184–cysteine 191, cysteine 187–cysteine 196, cysteine 200–cysteine 233, cysteine 209–cysteine 227, and cysteine 218–cysteine 231. The ShKT domain occupies 200 to 233 (CKHNDDLSNCKPLAKKSKCQTEWIKSKCPATCFC).

This sequence belongs to the CRISP family. In terms of tissue distribution, expressed by the venom gland.

The protein resides in the secreted. In terms of biological role, blocks olfactory (CNGA2) and retinal (CNGA1) CNG channel currents. Does not affect neither depolarization- nor caffeine-induced contraction of smooth muscle. This Oxyuranus microlepidotus (Inland taipan) protein is Cysteine-rich venom protein pseudechetoxin-like.